The sequence spans 192 residues: Zinc finger CCHC domain-containing protein 10 (192 aa).

Residues 43-60 (VRCQKCLEFGHWTYECTG) form a CCHC-type zinc finger. The disordered stretch occupies residues 89-192 (QSIGETNVER…DEPPKKKKKK (104 aa)). Low complexity-rich tracts occupy residues 109-136 (TSSS…SSSS) and 144-179 (SSSS…STDS).

This Homo sapiens (Human) protein is Zinc finger CCHC domain-containing protein 10 (ZCCHC10).